The following is a 189-amino-acid chain: MTQYRGGYVTSCYAQALFNASVSKLNDICKGIKFIFNLSENGNNQFLSFLANPTANLKDKISVIELITNHIDTTLSRFILVVVTNNRGNMLLQIFNTFLEYVRKHNKEVSISVTSCSKLTTQEKQGICNALLEKYGKVVSITNTVDPSILGGFIIRVGFDIIDVSLNSYLQSLQELSKIAVRSMVNSKV.

It belongs to the ATPase delta chain family. In terms of assembly, F-type ATPases have 2 components, F(1) - the catalytic core - and F(0) - the membrane proton channel. F(1) has five subunits: alpha(3), beta(3), gamma(1), delta(1), epsilon(1). F(0) has three main subunits: a(1), b(2) and c(10-14). The alpha and beta chains form an alternating ring which encloses part of the gamma chain. F(1) is attached to F(0) by a central stalk formed by the gamma and epsilon chains, while a peripheral stalk is formed by the delta and b chains.

It localises to the cell inner membrane. F(1)F(0) ATP synthase produces ATP from ADP in the presence of a proton or sodium gradient. F-type ATPases consist of two structural domains, F(1) containing the extramembraneous catalytic core and F(0) containing the membrane proton channel, linked together by a central stalk and a peripheral stalk. During catalysis, ATP synthesis in the catalytic domain of F(1) is coupled via a rotary mechanism of the central stalk subunits to proton translocation. Functionally, this protein is part of the stalk that links CF(0) to CF(1). It either transmits conformational changes from CF(0) to CF(1) or is implicated in proton conduction. The polypeptide is ATP synthase subunit delta (Ehrlichia ruminantium (strain Gardel)).